The following is a 220-amino-acid chain: 7-cyano-7-deazaguanine synthase (220 aa).

10–20 provides a ligand contact to ATP; the sequence is FSGGQDSTTCL. Zn(2+)-binding residues include cysteine 186, cysteine 195, cysteine 198, and cysteine 201.

The protein belongs to the QueC family. Homodimer. The cofactor is Zn(2+).

It catalyses the reaction 7-carboxy-7-deazaguanine + NH4(+) + ATP = 7-cyano-7-deazaguanine + ADP + phosphate + H2O + H(+). It participates in purine metabolism; 7-cyano-7-deazaguanine biosynthesis. Functionally, catalyzes the ATP-dependent conversion of 7-carboxy-7-deazaguanine (CDG) to 7-cyano-7-deazaguanine (preQ(0)). This chain is 7-cyano-7-deazaguanine synthase, found in Bacillus cereus (strain ATCC 14579 / DSM 31 / CCUG 7414 / JCM 2152 / NBRC 15305 / NCIMB 9373 / NCTC 2599 / NRRL B-3711).